Here is a 255-residue protein sequence, read N- to C-terminus: Imidazole glycerol phosphate synthase subunit HisF (255 aa).

Active-site residues include Asp-11 and Asp-130.

It belongs to the HisA/HisF family. Heterodimer of HisH and HisF.

It localises to the cytoplasm. It catalyses the reaction 5-[(5-phospho-1-deoxy-D-ribulos-1-ylimino)methylamino]-1-(5-phospho-beta-D-ribosyl)imidazole-4-carboxamide + L-glutamine = D-erythro-1-(imidazol-4-yl)glycerol 3-phosphate + 5-amino-1-(5-phospho-beta-D-ribosyl)imidazole-4-carboxamide + L-glutamate + H(+). It participates in amino-acid biosynthesis; L-histidine biosynthesis; L-histidine from 5-phospho-alpha-D-ribose 1-diphosphate: step 5/9. In terms of biological role, IGPS catalyzes the conversion of PRFAR and glutamine to IGP, AICAR and glutamate. The HisF subunit catalyzes the cyclization activity that produces IGP and AICAR from PRFAR using the ammonia provided by the HisH subunit. In Campylobacter jejuni subsp. jejuni serotype O:6 (strain 81116 / NCTC 11828), this protein is Imidazole glycerol phosphate synthase subunit HisF.